Consider the following 744-residue polypeptide: Phosphoribosylformylglycinamidine synthase subunit PurL (744 aa).

The active site involves histidine 49. Residues tyrosine 52 and lysine 91 each coordinate ATP. A Mg(2+)-binding site is contributed by glutamate 93. Residues 94–97 (SHNH) and arginine 116 contribute to the substrate site. Histidine 95 acts as the Proton acceptor in catalysis. Residue aspartate 117 coordinates Mg(2+). Residue glutamine 240 coordinates substrate. Residue aspartate 268 participates in Mg(2+) binding. 312 to 314 (ESQ) provides a ligand contact to substrate. Aspartate 493 and glycine 530 together coordinate ATP. Asparagine 531 contributes to the Mg(2+) binding site. A substrate-binding site is contributed by serine 533.

It belongs to the FGAMS family. As to quaternary structure, monomer. Part of the FGAM synthase complex composed of 1 PurL, 1 PurQ and 2 PurS subunits.

The protein resides in the cytoplasm. It catalyses the reaction N(2)-formyl-N(1)-(5-phospho-beta-D-ribosyl)glycinamide + L-glutamine + ATP + H2O = 2-formamido-N(1)-(5-O-phospho-beta-D-ribosyl)acetamidine + L-glutamate + ADP + phosphate + H(+). It participates in purine metabolism; IMP biosynthesis via de novo pathway; 5-amino-1-(5-phospho-D-ribosyl)imidazole from N(2)-formyl-N(1)-(5-phospho-D-ribosyl)glycinamide: step 1/2. Functionally, part of the phosphoribosylformylglycinamidine synthase complex involved in the purines biosynthetic pathway. Catalyzes the ATP-dependent conversion of formylglycinamide ribonucleotide (FGAR) and glutamine to yield formylglycinamidine ribonucleotide (FGAM) and glutamate. The FGAM synthase complex is composed of three subunits. PurQ produces an ammonia molecule by converting glutamine to glutamate. PurL transfers the ammonia molecule to FGAR to form FGAM in an ATP-dependent manner. PurS interacts with PurQ and PurL and is thought to assist in the transfer of the ammonia molecule from PurQ to PurL. In Nitrobacter hamburgensis (strain DSM 10229 / NCIMB 13809 / X14), this protein is Phosphoribosylformylglycinamidine synthase subunit PurL.